The following is a 471-amino-acid chain: Thiohydroximate-O-sulfate sulfur/sulfate-lyase (nitrile-forming) NSP2 (471 aa).

Residues valine 2 to serine 144 enclose the Jacalin-type lectin domain. 6 Kelch repeats span residues lysine 178 to valine 226, serine 231 to alanine 277, asparagine 281 to glycine 330, valine 332 to lysine 379, isoleucine 381 to alanine 435, and glycine 446 to alanine 471. Residue arginine 238 is the Proton donor of the active site. A (Z)-N-(sulfonatooxy)alkanimidothioate is bound by residues arginine 238, serine 271, arginine 293, glycine 322, and valine 371. Arginine 293 acts as the Proton donor in catalysis. 3 residues coordinate Fe(2+): glutamate 387, aspartate 391, and histidine 395. Tryptophan 433 is an a (Z)-N-(sulfonatooxy)alkanimidothioate binding site.

The protein belongs to the jacalin lectin family. It depends on Fe(2+) as a cofactor. As to expression, expressed only in seeds.

It catalyses the reaction a (Z)-N-(sulfonatooxy)alkanimidothioate = a nitrile + sulfur + sulfate. The catalysed reaction is (Z)-phenyl-N-(sulfonatooxy)methanimidothioate = phenylacetonitrile + sulfur + sulfate. It carries out the reaction (Z)-N-(sulfonatooxy)prop-2-enimidothioate = but-3-enenitrile + sulfur + sulfate. The enzyme catalyses (Z)-(indol-3-yl)-N-(sulfonatooxy)methanimidothioate = (indol-3-yl)acetonitrile + sulfur + sulfate. With respect to regulation, the presence of Fe(2+) supports lyase activity in a dose-dependent manner with both benzylglucosinolate and 2-propenylglucosinolate as substrates. More active at pH 7.4 than at pH 6. In terms of biological role, specifier protein responsible for constitutive and herbivore-induced simple nitrile formation, especially in seeds. Promotes simple nitriles, but not epithionitrile or thiocyanate formation. Converts allylglucosinolate (allyl-GSL), 2-propenylglucosinolate (sinigrin), indol-3-ylmethylglucosinolate (glucobrassicin), benzylisothiocyanate and benzylglucosinolate (glucotropaeolin) to their corresponding simple nitriles in the presence of myrosinase. Catalyzes mainly the conversion of benzylisothiocyanate when benzylglucosinolate is used as the initial substrate of myrosinase. Involved in the regulation of glucosinolate content in seeds, during stratification and germination. The protein is Thiohydroximate-O-sulfate sulfur/sulfate-lyase (nitrile-forming) NSP2 of Arabidopsis thaliana (Mouse-ear cress).